Reading from the N-terminus, the 678-residue chain is Methionine--tRNA ligase (678 aa).

Positions 12 to 22 (PYANGPIHLGH) match the 'HIGH' region motif. Residues C143, C146, C156, and C159 each coordinate Zn(2+). The 'KMSKS' region motif lies at 328–332 (KMSKS). K331 contacts ATP. The tRNA-binding domain maps to 577–678 (DFSKVDLRIA…SGAQPGMRVK (102 aa)).

The protein belongs to the class-I aminoacyl-tRNA synthetase family. MetG type 1 subfamily. In terms of assembly, homodimer. Zn(2+) serves as cofactor.

Its subcellular location is the cytoplasm. It carries out the reaction tRNA(Met) + L-methionine + ATP = L-methionyl-tRNA(Met) + AMP + diphosphate. Its function is as follows. Is required not only for elongation of protein synthesis but also for the initiation of all mRNA translation through initiator tRNA(fMet) aminoacylation. This Acidithiobacillus ferrooxidans (strain ATCC 23270 / DSM 14882 / CIP 104768 / NCIMB 8455) (Ferrobacillus ferrooxidans (strain ATCC 23270)) protein is Methionine--tRNA ligase.